A 238-amino-acid chain; its full sequence is Large ribosomal subunit protein uL1 (238 aa).

It belongs to the universal ribosomal protein uL1 family. Part of the 50S ribosomal subunit.

In terms of biological role, binds directly to 23S rRNA. The L1 stalk is quite mobile in the ribosome, and is involved in E site tRNA release. Protein L1 is also a translational repressor protein, it controls the translation of the L11 operon by binding to its mRNA. The sequence is that of Large ribosomal subunit protein uL1 from Rickettsia prowazekii (strain Madrid E).